A 547-amino-acid polypeptide reads, in one-letter code: Ribosome protection protein VmlR (547 aa).

Positions 5–200 constitute an ABC transporter 1 domain; that stretch reads VTLTNVSYEV…FREKKRLTQQ (196 aa). 37-44 provides a ligand contact to ATP; sequence GKNGAGKS. The antibiotic resistance domain (ARD) stretch occupies residues 183–289; it reads GNYSGYMKFR…SIDTTHKTGK (107 aa). Coiled-coil stretches lie at residues 193-222 and 245-269; these read EKKRLTQQREYEKQQKMVERIEAQMNGLAS and AKRTDAQIKSKQKRLEKELEKAKAE. Positions 292 to 504 constitute an ABC transporter 2 domain; that stretch reads LEVQNVTKAF…REELRLKLET (213 aa). 324–331 contributes to the ATP binding site; that stretch reads GPNGSGKT. Positions 483–547 are C-terminal extension (CTE); that stretch reads KQLNDVPSER…KELDHQDKKD (65 aa). Residues 488–543 adopt a coiled-coil conformation; it reads VPSERNEREELRLKLETERQEVLGKLSFMTPNDKGYKELDQAFNELTKRIKELDHQ.

Belongs to the ABC transporter superfamily. ABCF family. ARE2 subfamily. As to quaternary structure, binds within the E-site of the 70S ribosome, where it contacts ribosomal proteins L1, L5, L33-1, S7, S11, the 16 and 23S rRNAs and the acceptor arm of the P-site tRNA.

The protein localises to the cytoplasm. Functionally, recognizes and binds in the vacant E-site of ribosomes stalled by some peptidyltransferase center (PTC)-targeting antibiotics. Makes contact with the PTC and both ribosomal subunits. Induces conformational changes in the P-site, which allows it to dislodge the antibiotic from its PTC binding site. Binds to ribosomes either directly following translation initation or subsequent to E tRNA release during elongation. Involved in resistance to a narrow spectrum of antibiotics (the streptogramin A antibiotic virginiamycin M, the lincosamide antibiotic lincomycin and the pleuromutilin antibiotic tiamulin). In Bacillus subtilis (strain 168), this protein is Ribosome protection protein VmlR.